The primary structure comprises 224 residues: Response regulator protein GraR (224 aa).

A Response regulatory domain is found at 2–115 (QILLVEDDNT…VLIAKLQAIY (114 aa)). Position 51 is a 4-aspartylphosphate (Asp-51). The ompR/PhoB-type DNA-binding region spans 126–224 (KRTLTWQDAV…KVGKGYMAHE (99 aa)). 3 positions are modified to phosphothreonine: Thr-128, Thr-130, and Thr-149.

Interacts with GraX. Post-translationally, phosphorylated by GraS. Phosphorylated by Stk1; phosphorylation increases the DNA-binding activity of GraR.

The protein resides in the cytoplasm. In terms of biological role, member of the two-component regulatory system GraR/GraS involved in resistance against cationic antimicrobial peptides (CAMPs). Upon phosphorylation by GraS, functions as a transcription regulator by direct binding to promoter regions of target genes such as adhesins, exoproteins, transporters, toxins, and proteins involved in cell wall synthesis. Down-regulates the expression of many genes involved in RNA and amino acid synthesis or glycolysis. The chain is Response regulator protein GraR (graR) from Staphylococcus aureus (strain MRSA252).